The chain runs to 145 residues: Ribonuclease H (145 aa).

The region spanning 1 to 141 (MQEVTIYSDG…ADALANRGVA (141 aa)) is the RNase H type-1 domain. Mg(2+)-binding residues include Asp-9, Glu-47, Asp-69, and Asp-133.

It belongs to the RNase H family. As to quaternary structure, monomer. Mg(2+) is required as a cofactor.

The protein localises to the cytoplasm. It catalyses the reaction Endonucleolytic cleavage to 5'-phosphomonoester.. Functionally, endonuclease that specifically degrades the RNA of RNA-DNA hybrids. The chain is Ribonuclease H from Cupriavidus metallidurans (strain ATCC 43123 / DSM 2839 / NBRC 102507 / CH34) (Ralstonia metallidurans).